Consider the following 190-residue polypeptide: DNA-invertase (190 aa).

The region spanning 2-135 (ATIGYIRVST…AGLAAARAQG (134 aa)) is the Resolvase/invertase-type recombinase catalytic domain. The O-(5'-phospho-DNA)-serine intermediate role is filled by S10. Positions 162–181 (RQQLAIIFGIGVSTLYRYFP) form a DNA-binding region, H-T-H motif.

This sequence belongs to the site-specific recombinase resolvase family.

In terms of biological role, a DNA fragment of approximately 900 base pairs, adjacent to the fljB (H2) gene, which specifies the synthesis of phase-2 flagellin, can exist in either orientation with respect to fljB. The orientation of the inversion region controls expression of fljB. The hin gene occupies about two-thirds of the inversion region; it is required for the inversion of the fljB controlling region. The polypeptide is DNA-invertase (hin) (Salmonella abortus-equi).